The following is a 490-amino-acid chain: Betaine aldehyde dehydrogenase (490 aa).

Residue aspartate 93 participates in K(+) binding. 150 to 152 (GAW) is an NAD(+) binding site. Lysine 162 serves as the catalytic Charge relay system. 176 to 179 (KPSE) is a binding site for NAD(+). Residue valine 180 coordinates K(+). 230–233 (GIAS) serves as a coordination point for NAD(+). Leucine 246 provides a ligand contact to K(+). Catalysis depends on glutamate 252, which acts as the Proton acceptor. 3 residues coordinate NAD(+): glycine 254, cysteine 286, and glutamate 387. Cysteine 286 functions as the Nucleophile in the catalytic mechanism. The residue at position 286 (cysteine 286) is a Cysteine sulfenic acid (-SOH). Residues lysine 457 and glycine 460 each coordinate K(+). Glutamate 464 acts as the Charge relay system in catalysis.

The protein belongs to the aldehyde dehydrogenase family. Dimer of dimers. The cofactor is K(+).

It catalyses the reaction betaine aldehyde + NAD(+) + H2O = glycine betaine + NADH + 2 H(+). It functions in the pathway amine and polyamine biosynthesis; betaine biosynthesis via choline pathway; betaine from betaine aldehyde: step 1/1. Its function is as follows. Involved in the biosynthesis of the osmoprotectant glycine betaine. Catalyzes the irreversible oxidation of betaine aldehyde to the corresponding acid. The protein is Betaine aldehyde dehydrogenase of Yersinia pseudotuberculosis serotype O:3 (strain YPIII).